We begin with the raw amino-acid sequence, 142 residues long: 3-hydroxyacyl-[acyl-carrier-protein] dehydratase FabZ (142 aa).

Histidine 49 is a catalytic residue.

This sequence belongs to the thioester dehydratase family. FabZ subfamily.

The protein resides in the cytoplasm. It catalyses the reaction a (3R)-hydroxyacyl-[ACP] = a (2E)-enoyl-[ACP] + H2O. In terms of biological role, involved in unsaturated fatty acids biosynthesis. Catalyzes the dehydration of short chain beta-hydroxyacyl-ACPs and long chain saturated and unsaturated beta-hydroxyacyl-ACPs. In Deinococcus geothermalis (strain DSM 11300 / CIP 105573 / AG-3a), this protein is 3-hydroxyacyl-[acyl-carrier-protein] dehydratase FabZ.